The primary structure comprises 66 residues: UPF0370 protein YpfN (66 aa).

The helical transmembrane segment at 4 to 24 threads the bilayer; sequence LAKYWWILVLVFLVGVLLNVI. Residues 39–66 form a disordered region; the sequence is KPELPPHRDFNDKWDDEDGWPKKDQPKK. Over residues 42-66 the composition is skewed to basic and acidic residues; it reads LPPHRDFNDKWDDEDGWPKKDQPKK.

This sequence belongs to the UPF0370 family.

Its subcellular location is the cell membrane. The chain is UPF0370 protein YpfN from Salmonella paratyphi B (strain ATCC BAA-1250 / SPB7).